We begin with the raw amino-acid sequence, 136 residues long: Small ribosomal subunit protein uS9 (136 aa).

Residues 96-136 are disordered; the sequence is LSPDNRKPLKTEGHLSRDPRAKERRKYGLKKARKAPQFSKR. Residues 98 to 116 are compositionally biased toward basic and acidic residues; that stretch reads PDNRKPLKTEGHLSRDPRA. A compositionally biased stretch (basic residues) spans 117-136; the sequence is KERRKYGLKKARKAPQFSKR.

This sequence belongs to the universal ribosomal protein uS9 family.

This is Small ribosomal subunit protein uS9 from Prochlorococcus marinus (strain MIT 9515).